A 111-amino-acid polypeptide reads, in one-letter code: Large ribosomal subunit protein uL22 (111 aa).

It belongs to the universal ribosomal protein uL22 family. In terms of assembly, part of the 50S ribosomal subunit.

In terms of biological role, this protein binds specifically to 23S rRNA; its binding is stimulated by other ribosomal proteins, e.g. L4, L17, and L20. It is important during the early stages of 50S assembly. It makes multiple contacts with different domains of the 23S rRNA in the assembled 50S subunit and ribosome. The globular domain of the protein is located near the polypeptide exit tunnel on the outside of the subunit, while an extended beta-hairpin is found that lines the wall of the exit tunnel in the center of the 70S ribosome. This is Large ribosomal subunit protein uL22 from Geobacter sulfurreducens (strain ATCC 51573 / DSM 12127 / PCA).